Here is a 256-residue protein sequence, read N- to C-terminus: Ribonuclease HII (256 aa).

An RNase H type-2 domain is found at 72-256 (QYIAGMDEVG…SFNPVPKYLN (185 aa)). D78, E79, and D170 together coordinate a divalent metal cation.

The protein belongs to the RNase HII family. It depends on Mn(2+) as a cofactor. The cofactor is Mg(2+).

It is found in the cytoplasm. The enzyme catalyses Endonucleolytic cleavage to 5'-phosphomonoester.. Endonuclease that specifically degrades the RNA of RNA-DNA hybrids. In Limosilactobacillus reuteri (strain DSM 20016) (Lactobacillus reuteri), this protein is Ribonuclease HII.